The following is a 350-amino-acid chain: Chorismate synthase (350 aa).

Residue Arg48 coordinates NADP(+). Residues 125–127, Gly277, 292–296, and Arg318 each bind FMN; these read RSS and KPIPS.

It belongs to the chorismate synthase family. In terms of assembly, homotetramer. FMNH2 is required as a cofactor.

The enzyme catalyses 5-O-(1-carboxyvinyl)-3-phosphoshikimate = chorismate + phosphate. It functions in the pathway metabolic intermediate biosynthesis; chorismate biosynthesis; chorismate from D-erythrose 4-phosphate and phosphoenolpyruvate: step 7/7. Its function is as follows. Catalyzes the anti-1,4-elimination of the C-3 phosphate and the C-6 proR hydrogen from 5-enolpyruvylshikimate-3-phosphate (EPSP) to yield chorismate, which is the branch point compound that serves as the starting substrate for the three terminal pathways of aromatic amino acid biosynthesis. This reaction introduces a second double bond into the aromatic ring system. The chain is Chorismate synthase from Maridesulfovibrio salexigens (strain ATCC 14822 / DSM 2638 / NCIMB 8403 / VKM B-1763) (Desulfovibrio salexigens).